The chain runs to 543 residues: Sodium/glucose cotransporter (543 aa).

Transmembrane regions (helical) follow at residues 10–30, 45–65, 79–99, 129–149, 156–176, 193–213, 246–266, 287–307, 345–365, 401–421, 427–447, 455–475, 483–503, and 523–543; these read FIDIMVFAIYVAIIIGVGLWV, FLAGKSLPWWAVGASLIAANI, SIGLAIASYEWMSAITLIIVG, ILAVFWISLYIFVNLTSVLYL, TILGIPLMYSILGLALFALVY, VFFLVLGGFMTTYMAVSFIGG, LPGIAVLIGGLWVANLYYWGF, IVFAAFLKLIVPFLVVLPGIA, FLPVGVKGVVFAALAAAIVSS, TAAVVALIIACLIAPMLGGIG, IQEYTGLVSPGILAVFLLGLF, GAIIGVVASIPFALFLKFMPL, MLYTLLFTMVVIAFTSLSTSI, and SFNIAAYGIMIVLAVLYTLFW.

The protein resides in the cell membrane. In terms of biological role, actively transports glucose into cells by Na(+) cotransport. The polypeptide is Sodium/glucose cotransporter (sglT) (Vibrio parahaemolyticus).